The following is a 419-amino-acid chain: Carboxypeptidase A1 (419 aa).

The first 16 residues, 1–16 (MWGLLIFSVLLGGVLA), serve as a signal peptide directing secretion. A propeptide spans 17–110 (KEDFVGHQVL…QEQMFASQGR (94 aa)) (activation peptide). The Peptidase M14 domain occupies 121–414 (TYHTLEEIYD…LALLTIMEHT (294 aa)). 2 residues coordinate Zn(2+): H179 and E182. Substrate is bound by residues 179-182 (HSRE), R237, and 254-255 (NR). Residues C248 and C271 are joined by a disulfide bond. H306 contributes to the Zn(2+) binding site. Substrate is bound by residues 307–308 (SY) and Y358. Catalysis depends on E380, which acts as the Proton donor/acceptor.

It belongs to the peptidase M14 family. In terms of assembly, monomer. May form a complex with proelastase 2. Zn(2+) is required as a cofactor.

Its subcellular location is the secreted. It carries out the reaction Release of a C-terminal amino acid, but little or no action with -Asp, -Glu, -Arg, -Lys or -Pro.. The enzyme catalyses leukotriene C4 + H2O = leukotriene F4 + glycine. Its function is as follows. Carboxypeptidase that catalyzes the release of a C-terminal amino acid, but has little or no action with -Asp, -Glu, -Arg, -Lys or -Pro. Catalyzes the conversion of leukotriene C4 to leukotriene F4 via the hydrolysis of an amide bond. This chain is Carboxypeptidase A1 (CPA1), found in Sus scrofa (Pig).